Reading from the N-terminus, the 353-residue chain is Methionine import ATP-binding protein MetN (353 aa).

The ABC transporter domain maps to Leu6–Val249. Gly41 to Ser48 is an ATP binding site.

The protein belongs to the ABC transporter superfamily. Methionine importer (TC 3.A.1.24) family. In terms of assembly, the complex is composed of two ATP-binding proteins (MetN), two transmembrane proteins (MetI) and a solute-binding protein (MetQ).

The protein resides in the cell membrane. The catalysed reaction is L-methionine(out) + ATP + H2O = L-methionine(in) + ADP + phosphate + H(+). The enzyme catalyses D-methionine(out) + ATP + H2O = D-methionine(in) + ADP + phosphate + H(+). In terms of biological role, part of the ABC transporter complex MetNIQ involved in methionine import. Responsible for energy coupling to the transport system. The protein is Methionine import ATP-binding protein MetN of Lactobacillus acidophilus (strain ATCC 700396 / NCK56 / N2 / NCFM).